The primary structure comprises 345 residues: Histidinol-phosphate aminotransferase (345 aa).

Lys-206 bears the N6-(pyridoxal phosphate)lysine mark.

The protein belongs to the class-II pyridoxal-phosphate-dependent aminotransferase family. Histidinol-phosphate aminotransferase subfamily. In terms of assembly, homodimer. Requires pyridoxal 5'-phosphate as cofactor.

The enzyme catalyses L-histidinol phosphate + 2-oxoglutarate = 3-(imidazol-4-yl)-2-oxopropyl phosphate + L-glutamate. It participates in amino-acid biosynthesis; L-histidine biosynthesis; L-histidine from 5-phospho-alpha-D-ribose 1-diphosphate: step 7/9. This chain is Histidinol-phosphate aminotransferase, found in Bacteroides fragilis (strain YCH46).